Reading from the N-terminus, the 1393-residue chain is DNA-directed RNA polymerase subunit beta' (1393 aa).

Zn(2+)-binding residues include cysteine 70, cysteine 72, cysteine 85, and cysteine 88. Mg(2+)-binding residues include aspartate 461, aspartate 463, and aspartate 465. Residues cysteine 815, cysteine 889, cysteine 896, and cysteine 899 each coordinate Zn(2+).

Belongs to the RNA polymerase beta' chain family. In terms of assembly, the RNAP catalytic core consists of 2 alpha, 1 beta, 1 beta' and 1 omega subunit. When a sigma factor is associated with the core the holoenzyme is formed, which can initiate transcription. Mg(2+) serves as cofactor. Requires Zn(2+) as cofactor.

It catalyses the reaction RNA(n) + a ribonucleoside 5'-triphosphate = RNA(n+1) + diphosphate. Its function is as follows. DNA-dependent RNA polymerase catalyzes the transcription of DNA into RNA using the four ribonucleoside triphosphates as substrates. The chain is DNA-directed RNA polymerase subunit beta' from Vesicomyosocius okutanii subsp. Calyptogena okutanii (strain HA).